Reading from the N-terminus, the 369-residue chain is tRNA-specific 2-thiouridylase MnmA (369 aa).

Residues 12-19 (GMSGGVDS) and methionine 38 each bind ATP. Residues 98-100 (NPD) form an interaction with target base in tRNA region. Residue cysteine 103 is the Nucleophile of the active site. An intrachain disulfide couples cysteine 103 to cysteine 200. Glycine 128 contacts ATP. Residues 150 to 152 (KDQ) are interaction with tRNA. The active-site Cysteine persulfide intermediate is the cysteine 200. Residues 312–313 (RY) form an interaction with tRNA region.

Belongs to the MnmA/TRMU family. Interacts with TusE.

The protein localises to the cytoplasm. The catalysed reaction is S-sulfanyl-L-cysteinyl-[protein] + uridine(34) in tRNA + AH2 + ATP = 2-thiouridine(34) in tRNA + L-cysteinyl-[protein] + A + AMP + diphosphate + H(+). Catalyzes the 2-thiolation of uridine at the wobble position (U34) of tRNA(Lys), tRNA(Glu) and tRNA(Gln), leading to the formation of s(2)U34, the first step of tRNA-mnm(5)s(2)U34 synthesis. Sulfur is provided by IscS, via a sulfur-relay system. Binds ATP and its substrate tRNAs. In Sodalis glossinidius (strain morsitans), this protein is tRNA-specific 2-thiouridylase MnmA.